Consider the following 659-residue polypeptide: Envelope glycoprotein (659 aa).

The first 35 residues, 1–35 (MLLISNPRHLGHPMSPGNWKRLIILLSCVFGGAEM), serve as a signal peptide directing secretion. Topologically, residues 36 to 606 (NQQHNNPHQP…NRSPWLTTLL (571 aa)) are extracellular. Intrachain disulfides connect cysteine 141–cysteine 162 and cysteine 154–cysteine 167. A disordered region spans residues 278 to 301 (LSPPASPIPTVQASPPAPSTPSPT). Asparagine 318 carries N-linked (GlcNAc...) asparagine; by host glycosylation. Cystine bridges form between cysteine 328/cysteine 331, cysteine 328/cysteine 558, and cysteine 550/cysteine 557. The CXXC motif lies at 328-331 (CWLC). N-linked (GlcNAc...) asparagine; by host glycosylation is found at asparagine 389, asparagine 395, asparagine 407, and asparagine 427. Residues 466 to 486 (VSLTLAVLLGLGVAAGIGTGS) are fusion peptide. Positions 506–532 (AMDTDLRALQDSISKLEDSLTSLSEVV) form a coiled coil. Positions 533-549 (LQNRRGLDLLFLKEGGL) are immunosuppression. The short motif at 550–558 (CAALKEECC) is the CX6CC element. Residues 567–587 (VRDSMRRLKERLDKRQLEHQK) are a coiled coil. The chain crosses the membrane as a helical span at residues 607 to 627 (SALAGPLLLLLLLLTLGPCVI). Cysteine 625 carries the S-palmitoyl cysteine; by host lipid modification. The Cytoplasmic segment spans residues 628 to 659 (NKLVQFINDRVSAVRILVLRHKYQTLDNEDNL). The YXXL motif; contains endocytosis signal motif lies at 650–653 (YQTL).

As to quaternary structure, the mature envelope protein (Env) consists of a trimer of SU-TM heterodimers attached by a labile interchain disulfide bond. Specific enzymatic cleavages in vivo yield mature proteins. Envelope glycoproteins are synthesized as an inactive precursor that is N-glycosylated and processed likely by host cell furin or by a furin-like protease in the Golgi to yield the mature SU and TM proteins. The cleavage site between SU and TM requires the minimal sequence [KR]-X-[KR]-R. The R-peptide is released from the C-terminus of the cytoplasmic tail of the TM protein upon particle formation as a result of proteolytic cleavage by the viral protease. Cleavage of this peptide is required for TM to become fusogenic. Post-translationally, the CXXC motif is highly conserved across a broad range of retroviral envelope proteins. It is thought to participate in the formation of a labile disulfide bond possibly with the CX6CC motif present in the transmembrane protein. Isomerization of the intersubunit disulfide bond to an SU intrachain disulfide bond is thought to occur upon receptor recognition in order to allow membrane fusion. In terms of processing, the transmembrane protein is palmitoylated. The R-peptide is palmitoylated.

It localises to the virion membrane. The protein localises to the host cell membrane. The surface protein (SU) attaches the virus to the host cell by binding to its receptor. This interaction triggers the refolding of the transmembrane protein (TM) and is thought to activate its fusogenic potential by unmasking its fusion peptide. Fusion occurs at the host cell plasma membrane. In terms of biological role, the transmembrane protein (TM) acts as a class I viral fusion protein. Under the current model, the protein has at least 3 conformational states: pre-fusion native state, pre-hairpin intermediate state, and post-fusion hairpin state. During viral and target cell membrane fusion, the coiled coil regions (heptad repeats) assume a trimer-of-hairpins structure, positioning the fusion peptide in close proximity to the C-terminal region of the ectodomain. The formation of this structure appears to drive apposition and subsequent fusion of viral and target cell membranes. Membranes fusion leads to delivery of the nucleocapsid into the cytoplasm. The polypeptide is Envelope glycoprotein (env) (Phascolarctos cinereus (Koala)).